The sequence spans 56 residues: Photosystem II reaction center X protein (56 aa).

The chain crosses the membrane as a helical span at residues 27 to 47 (IGSFLAAGALIVAPAAAALIW).

This sequence belongs to the PsbX family. Type 2 subfamily. As to quaternary structure, PSII consists of a core antenna complex that captures photons, and an electron transfer chain that converts photonic excitation into a charge separation. PSII forms dimeric complexes.

It is found in the cellular thylakoid membrane. Its function is as follows. Involved in the binding and/or turnover of quinones at the Q(B) site of Photosystem II. The sequence is that of Photosystem II reaction center X protein from Prochlorococcus marinus (strain NATL2A).